A 200-amino-acid polypeptide reads, in one-letter code: Holliday junction resolvase RecU (200 aa).

Residues Thr85, Asp87, Glu100, and Gln119 each coordinate Mg(2+).

This sequence belongs to the RecU family. Requires Mg(2+) as cofactor.

Its subcellular location is the cytoplasm. The catalysed reaction is Endonucleolytic cleavage at a junction such as a reciprocal single-stranded crossover between two homologous DNA duplexes (Holliday junction).. Endonuclease that resolves Holliday junction intermediates in genetic recombination. Cleaves mobile four-strand junctions by introducing symmetrical nicks in paired strands. Promotes annealing of linear ssDNA with homologous dsDNA. Required for DNA repair, homologous recombination and chromosome segregation. This is Holliday junction resolvase RecU from Bacillus cytotoxicus (strain DSM 22905 / CIP 110041 / 391-98 / NVH 391-98).